A 404-amino-acid chain; its full sequence is MNNSRMSSVSTQKTTGRSALGTKSALAAIIATTMMVSVASAASLQTTKATEAASTGWATQSGGTTGGAKASSSKIYAVKSISEFKAALNGTDSSPKIIQVTGAIDISGGKAYTSFDDQKARSQISIPSNTTIIGIGNKGKFTNGSLVVKGVSNVILRNLYIETPVDVAPHYEEGDGWNAEWDAVVIDSTDHVWVDHVTISDGSFTDDKYTTKNGEKYVQHDGSLDIKRGSDYVTVSNSRFELHDKTILIGHSDNNGSQDAGKLRVTFHNNLFDRVGERTPRVRFGSVHAYNNVYVGDVNHKAYRYQYSFGIGTSGSLLSESNAFTIDNMKKISGRDKECSVVKAFNGKIFSDKGSIINGASYNLNGCGFGFSAYSAKIPYKYSAQTITTSLAGSISSNAGYGKL.

A signal peptide spans 1–41 (MNNSRMSSVSTQKTTGRSALGTKSALAAIIATTMMVSVASA). Residues D182 and D225 each coordinate Ca(2+). The active site involves R278.

This sequence belongs to the polysaccharide lyase 1 family. PLBC subfamily. It depends on Ca(2+) as a cofactor.

The protein localises to the secreted. The catalysed reaction is Eliminative cleavage of (1-&gt;4)-alpha-D-galacturonan to give oligosaccharides with 4-deoxy-alpha-D-galact-4-enuronosyl groups at their non-reducing ends.. It functions in the pathway glycan metabolism; pectin degradation; 2-dehydro-3-deoxy-D-gluconate from pectin: step 2/5. Involved in maceration and soft-rotting of plant tissue. Pectate lyases have been implicated as pathogenicity factors which induce maceration or rotting of plant tissue. PelE is sufficient to induce these effects under laboratory conditions. The protein is Pectate lyase E (pelE) of Dickeya chrysanthemi (Pectobacterium chrysanthemi).